Consider the following 363-residue polypeptide: Probable L-tyrosine/L-aspartate decarboxylase (363 aa).

K224 bears the N6-(pyridoxal phosphate)lysine mark.

Belongs to the group II decarboxylase family. MfnA subfamily. Pyridoxal 5'-phosphate serves as cofactor.

The catalysed reaction is L-tyrosine + H(+) = tyramine + CO2. It catalyses the reaction L-aspartate + H(+) = beta-alanine + CO2. It participates in cofactor biosynthesis; methanofuran biosynthesis. Its pathway is cofactor biosynthesis; coenzyme A biosynthesis. In terms of biological role, catalyzes the decarboxylation of L-tyrosine to produce tyramine for methanofuran biosynthesis. Can also catalyze the decarboxylation of L-aspartate to produce beta-alanine for coenzyme A (CoA) biosynthesis. This chain is Probable L-tyrosine/L-aspartate decarboxylase, found in Methanosphaerula palustris (strain ATCC BAA-1556 / DSM 19958 / E1-9c).